Reading from the N-terminus, the 273-residue chain is 3-methyl-2-oxobutanoate hydroxymethyltransferase (273 aa).

Positions 53 and 92 each coordinate Mg(2+). 3-methyl-2-oxobutanoate is bound by residues 53 to 54, aspartate 92, and lysine 120; that span reads DS. Glutamate 122 is a Mg(2+) binding site. The active-site Proton acceptor is the glutamate 189.

It belongs to the PanB family. In terms of assembly, homodecamer; pentamer of dimers. Mg(2+) is required as a cofactor.

It is found in the cytoplasm. It catalyses the reaction 3-methyl-2-oxobutanoate + (6R)-5,10-methylene-5,6,7,8-tetrahydrofolate + H2O = 2-dehydropantoate + (6S)-5,6,7,8-tetrahydrofolate. Its pathway is cofactor biosynthesis; (R)-pantothenate biosynthesis; (R)-pantoate from 3-methyl-2-oxobutanoate: step 1/2. Catalyzes the reversible reaction in which hydroxymethyl group from 5,10-methylenetetrahydrofolate is transferred onto alpha-ketoisovalerate to form ketopantoate. This is 3-methyl-2-oxobutanoate hydroxymethyltransferase from Cupriavidus necator (strain ATCC 17699 / DSM 428 / KCTC 22496 / NCIMB 10442 / H16 / Stanier 337) (Ralstonia eutropha).